The following is a 621-amino-acid chain: E3 SUMO-protein ligase PIAS2 (621 aa).

The SAP domain occupies 11–45 (VSSFRVSELQVLLGFAGRNKSGRKHDLLMRALHLL). An LXXLL motif motif is present at residues 19–23 (LQVLL). Residues Lys46 and Lys249 each participate in a glycyl lysine isopeptide (Lys-Gly) (interchain with G-Cter in SUMO2) cross-link. In terms of domain architecture, PINIT spans 134-299 (QPSPPIPPVH…SMSVYLVRQL (166 aa)). The SP-RING-type zinc finger occupies 331–412 (PDSEIATTSL…FMEILNDCSD (82 aa)). Cys362, His364, Cys385, and Cys388 together coordinate Zn(2+). Glycyl lysine isopeptide (Lys-Gly) (interchain with G-Cter in SUMO2) cross-links involve residues Lys430, Lys435, Lys443, and Lys452. The segment at 467 to 473 (IDVIDLT) is SUMO1-binding. 3 positions are modified to phosphoserine: Ser476, Ser477, and Ser478. Residues 484–492 (PPAKRKCIF) carry the Nuclear localization signal motif. Lys489 is covalently cross-linked (Glycyl lysine isopeptide (Lys-Gly) (interchain with G-Cter in SUMO2)). Phosphoserine is present on Ser499. Lys502 participates in a covalent cross-link: Glycyl lysine isopeptide (Lys-Gly) (interchain with G-Cter in SUMO2). The segment covering 577 to 610 (TASSTSVTTTSPHESSTHVSSSSSRSETGVITSS) has biased composition (low complexity). A disordered region spans residues 577 to 621 (TASSTSVTTTSPHESSTHVSSSSSRSETGVITSSGRNIPDIISLD).

It belongs to the PIAS family. In terms of assembly, binds SUMO1 and UBE2I. Interacts with AXIN1, JUN, MDM2, PARK7, TP53 and TP73 isoform alpha, but not TP73 isoform beta. Interacts with STAT4 following IL12 and IFN-alpha stimulation of T-cells. Interacts also with GTF2I, GTF2IRD1, IKFZ1, DAB2 and MSX2, as well as with several steroid receptors, including ESR1, ESR2, NR3C1, PGR, AR, and with NCOA2. Sumoylation of a target protein seems to enhance the interaction. Binds to sumoylated ELK1. Interacts with PLAG1. Binds DNA, such as CDKN1A promoter, in a sequence-specific manner. Interacts with KLF8; the interaction results in SUMO ligation and repression of KLF8 transcriptional activity and of its cell cycle progression into G(1) phase. Interacts with IFIH1/MDA5. Interacts with PML. Interacts with PRDM1. Post-translationally, sumoylated.

Its subcellular location is the nucleus speckle. It is found in the nucleus. The protein resides in the PML body. It carries out the reaction S-ubiquitinyl-[E2 ubiquitin-conjugating enzyme]-L-cysteine + [acceptor protein]-L-lysine = [E2 ubiquitin-conjugating enzyme]-L-cysteine + N(6)-ubiquitinyl-[acceptor protein]-L-lysine.. The protein operates within protein modification; protein sumoylation. In terms of biological role, functions as an E3-type small ubiquitin-like modifier (SUMO) ligase, stabilizing the interaction between UBE2I and the substrate, and as a SUMO-tethering factor. Plays a crucial role as a transcriptional coregulation in various cellular pathways, including the STAT pathway, the p53 pathway and the steroid hormone signaling pathway. The effects of this transcriptional coregulation, transactivation or silencing may vary depending upon the biological context and PIAS2 isoform studied. However, it seems to be mostly involved in gene silencing. Binds to sumoylated ELK1 and enhances its transcriptional activity by preventing recruitment of HDAC2 by ELK1, thus reversing SUMO-mediated repression of ELK1 transactivation activity. Isoform PIASx-beta, but not isoform PIASx-alpha, promotes MDM2 sumoylation. Isoform PIASx-alpha promotes PARK7 sumoylation. Isoform PIASx-beta promotes NCOA2 sumoylation more efficiently than isoform PIASx-alpha. Sumoylates PML at'Lys-65' and 'Lys-160'. This chain is E3 SUMO-protein ligase PIAS2 (Pias2), found in Mus musculus (Mouse).